We begin with the raw amino-acid sequence, 284 residues long: 2-dehydro-3-deoxyphosphooctonate aldolase (284 aa).

This sequence belongs to the KdsA family.

It is found in the cytoplasm. It catalyses the reaction D-arabinose 5-phosphate + phosphoenolpyruvate + H2O = 3-deoxy-alpha-D-manno-2-octulosonate-8-phosphate + phosphate. Its pathway is carbohydrate biosynthesis; 3-deoxy-D-manno-octulosonate biosynthesis; 3-deoxy-D-manno-octulosonate from D-ribulose 5-phosphate: step 2/3. It participates in bacterial outer membrane biogenesis; lipopolysaccharide biosynthesis. The sequence is that of 2-dehydro-3-deoxyphosphooctonate aldolase from Aliivibrio salmonicida (strain LFI1238) (Vibrio salmonicida (strain LFI1238)).